A 397-amino-acid polypeptide reads, in one-letter code: 8-amino-7-oxononanoate synthase (397 aa).

Arg-24 provides a ligand contact to substrate. Residue 110-111 (GY) coordinates pyridoxal 5'-phosphate. Substrate is bound at residue His-135. Pyridoxal 5'-phosphate contacts are provided by Ser-183, His-211, and Thr-240. Lys-243 bears the N6-(pyridoxal phosphate)lysine mark. Thr-357 is a substrate binding site.

Belongs to the class-II pyridoxal-phosphate-dependent aminotransferase family. BioF subfamily. Homodimer. It depends on pyridoxal 5'-phosphate as a cofactor.

The enzyme catalyses 6-carboxyhexanoyl-[ACP] + L-alanine + H(+) = (8S)-8-amino-7-oxononanoate + holo-[ACP] + CO2. It functions in the pathway cofactor biosynthesis; biotin biosynthesis. Functionally, catalyzes the decarboxylative condensation of pimeloyl-[acyl-carrier protein] and L-alanine to produce 8-amino-7-oxononanoate (AON), [acyl-carrier protein], and carbon dioxide. This Hydrogenovibrio crunogenus (strain DSM 25203 / XCL-2) (Thiomicrospira crunogena) protein is 8-amino-7-oxononanoate synthase.